The chain runs to 361 residues: GDSL esterase/lipase At4g18970 (361 aa).

The first 22 residues, 1-22, serve as a signal peptide directing secretion; the sequence is MARVCVMMMAMAIAMAMNIAMG. S35 functions as the Nucleophile in the catalytic mechanism. Active-site residues include D325 and H328.

The protein belongs to the 'GDSL' lipolytic enzyme family.

The protein resides in the secreted. The sequence is that of GDSL esterase/lipase At4g18970 from Arabidopsis thaliana (Mouse-ear cress).